A 1036-amino-acid chain; its full sequence is Lethal(2) giant larvae protein homolog 1 (1036 aa).

10 WD repeats span residues 38–71 (SALA…FTGL), 78–119 (VTQM…GLSF), 139–175 (VTVV…GQTL), 199–233 (SLQG…EHVF), 239–271 (LESL…GSPP), 289–331 (AINK…ETLV), 339–373 (VIDF…VLDL), 395–473 (TCSA…YKLS), 517–592 (QKVA…RVLI), and 601–662 (TAVA…LRQS). Residue Ser-662 is modified to Phosphoserine. A disordered region spans residues 670-694 (RVSGKKRATTASSKLQEANAQLAEQ). The segment covering 678 to 693 (TTASSKLQEANAQLAE) has biased composition (polar residues). 4 WD repeats span residues 722–782 (VRCL…KEVQ), 791–843 (AIAV…VSAK), 848–901 (LTAH…VHYS), and 915–938 (VFTR…SLSA). A Phosphothreonine modification is found at Thr-957. A phosphoserine mark is found at Ser-964, Ser-982, and Ser-989. The segment at 980–1002 (PESCEGSPSSAHSKRADTMEPPE) is disordered.

This sequence belongs to the WD repeat L(2)GL family. In terms of assembly, associated with nonmuscle myosin II heavy chain. Interacts with PRKCI/aPKC, PARD6B/Par-6 and PARD6A. Interacts with STX4A. Interacts with DCAF1. Interacts with RAB10 (GDP-bound form); the interaction is direct and promotes RAB10 association with membranes and activation through competition with the Rab inhibitor GDI1. Post-translationally, phosphorylated by PRKCI. In terms of tissue distribution, expressed at high level in the testis and at lower level in ovary, brain, spleen and kidney.

The protein localises to the early endosome membrane. It localises to the golgi apparatus. It is found in the trans-Golgi network membrane. Its subcellular location is the golgi apparatus membrane. The protein resides in the cell projection. The protein localises to the axon. It localises to the cytoplasm. It is found in the cytoskeleton. In terms of biological role, cortical cytoskeleton protein found in a complex involved in maintaining cell polarity and epithelial integrity. Involved in the regulation of mitotic spindle orientation, proliferation, differentiation and tissue organization of neuroepithelial cells. Involved in axonogenesis through RAB10 activation thereby regulating vesicular membrane trafficking toward the axonal plasma membrane. The protein is Lethal(2) giant larvae protein homolog 1 (Llgl1) of Rattus norvegicus (Rat).